Reading from the N-terminus, the 326-residue chain is Histone-lysine N-methyltransferase Suv4-20 (326 aa).

Residues 163–273 (QECTRYSLEG…AGDEITCFYG (111 aa)) form the SET domain. The segment at 294–313 (RGKFSTSDEEENDEPSALSE) is disordered.

This sequence belongs to the class V-like SAM-binding methyltransferase superfamily. Histone-lysine methyltransferase family. Suvar4-20 subfamily.

It is found in the nucleus. Its subcellular location is the chromosome. The enzyme catalyses N(6)-methyl-L-lysyl(20)-[histone H4] + S-adenosyl-L-methionine = N(6),N(6)-dimethyl-L-lysyl(20)-[histone H4] + S-adenosyl-L-homocysteine + H(+). The catalysed reaction is N(6),N(6)-dimethyl-L-lysyl(20)-[histone H4] + S-adenosyl-L-methionine = N(6),N(6),N(6)-trimethyl-L-lysyl(20)-[histone H4] + S-adenosyl-L-homocysteine + H(+). Functionally, histone methyltransferase that specifically di- and trimethylates 'Lys-20' of histone H4 (H4K20me2/me3). H4 'Lys-20' trimethylation represents a specific tag for epigenetic transcriptional repression. Contributes to dosage compensation of X chromosome-relative to autosome-linked gene expression, possibly by converting H4K20me1 to H4K20m2/me3 on autosomes. Involved in the regulation of growth and body fat metabolism downstream of the TOR complex 2 pathway. The protein is Histone-lysine N-methyltransferase Suv4-20 of Caenorhabditis briggsae.